Here is a 236-residue protein sequence, read N- to C-terminus: Small ribosomal subunit protein uS3 (236 aa).

Residues 39–107 (IRSYVMEELK…ETSLNIVEIR (69 aa)) enclose the KH type-2 domain. The interval 214-236 (ASEHRATRNDNSSSSLNRRRESV) is disordered.

Belongs to the universal ribosomal protein uS3 family. In terms of assembly, part of the 30S ribosomal subunit. Forms a tight complex with proteins S10 and S14.

Functionally, binds the lower part of the 30S subunit head. Binds mRNA in the 70S ribosome, positioning it for translation. In Bartonella bacilliformis (strain ATCC 35685 / KC583 / Herrer 020/F12,63), this protein is Small ribosomal subunit protein uS3.